The following is a 386-amino-acid chain: Alcohol dehydrogenase-like 2 (386 aa).

The Zn(2+) site is built by cysteine 51, threonine 53, histidine 74, cysteine 104, cysteine 107, cysteine 110, cysteine 118, and cysteine 183. The an alcohol site is built by threonine 53 and histidine 74. Threonine 53 lines the NAD(+) pocket. NAD(+) contacts are provided by residues 208–213 (GLGAVG), aspartate 232, lysine 237, 302–304 (LGM), phenylalanine 329, and arginine 379.

Belongs to the zinc-containing alcohol dehydrogenase family. Class-III subfamily. As to quaternary structure, homodimer. Zn(2+) serves as cofactor.

It is found in the cytoplasm. The enzyme catalyses a primary alcohol + NAD(+) = an aldehyde + NADH + H(+). It carries out the reaction a secondary alcohol + NAD(+) = a ketone + NADH + H(+). The polypeptide is Alcohol dehydrogenase-like 2 (Arabidopsis thaliana (Mouse-ear cress)).